A 268-amino-acid chain; its full sequence is Thiazole synthase (268 aa).

The active-site Schiff-base intermediate with DXP is K100. Residues G161, 187–188 (AG), and 209–210 (NT) each bind 1-deoxy-D-xylulose 5-phosphate. Residues 248–268 (ASPSSPAEGMFTGTQHPAANS) form a disordered region. Positions 259–268 (TGTQHPAANS) are enriched in polar residues.

The protein belongs to the ThiG family. In terms of assembly, homotetramer. Forms heterodimers with either ThiH or ThiS.

It localises to the cytoplasm. The catalysed reaction is [ThiS sulfur-carrier protein]-C-terminal-Gly-aminoethanethioate + 2-iminoacetate + 1-deoxy-D-xylulose 5-phosphate = [ThiS sulfur-carrier protein]-C-terminal Gly-Gly + 2-[(2R,5Z)-2-carboxy-4-methylthiazol-5(2H)-ylidene]ethyl phosphate + 2 H2O + H(+). The protein operates within cofactor biosynthesis; thiamine diphosphate biosynthesis. Functionally, catalyzes the rearrangement of 1-deoxy-D-xylulose 5-phosphate (DXP) to produce the thiazole phosphate moiety of thiamine. Sulfur is provided by the thiocarboxylate moiety of the carrier protein ThiS. In vitro, sulfur can be provided by H(2)S. The polypeptide is Thiazole synthase (Nitrosomonas europaea (strain ATCC 19718 / CIP 103999 / KCTC 2705 / NBRC 14298)).